Consider the following 504-residue polypeptide: Anaerobic nitric oxide reductase transcription regulator NorR (504 aa).

The residue at position 57 (D57) is a 4-aspartylphosphate. The 230-residue stretch at 187-416 (MIGLSPGMTQ…LEHAIHRAVV (230 aa)) folds into the Sigma-54 factor interaction domain. ATP contacts are provided by residues 215–222 (GETGTGKE) and 278–287 (ADNGTLFLDE). The segment at residues 479-498 (WAACARMLETDVANLHRLAK) is a DNA-binding region (H-T-H motif).

The protein operates within nitrogen metabolism; nitric oxide reduction. Its function is as follows. Required for the expression of anaerobic nitric oxide (NO) reductase, acts as a transcriptional activator for at least the norVW operon. Activation also requires sigma-54. In Escherichia coli (strain ATCC 8739 / DSM 1576 / NBRC 3972 / NCIMB 8545 / WDCM 00012 / Crooks), this protein is Anaerobic nitric oxide reductase transcription regulator NorR.